The following is a 143-amino-acid chain: Transcriptional regulator SlyA (143 aa).

Residues glutamate 2 to arginine 135 enclose the HTH marR-type domain. The segment at residues glutamine 49–glutamate 72 is a DNA-binding region (H-T-H motif).

Belongs to the SlyA family. Homodimer.

Its function is as follows. Transcription regulator that can specifically activate or repress expression of target genes. This is Transcriptional regulator SlyA from Yersinia enterocolitica serotype O:8 / biotype 1B (strain NCTC 13174 / 8081).